Here is a 292-residue protein sequence, read N- to C-terminus: Large ribosomal subunit protein bL19m (292 aa).

Positions 40-61 are disordered; the sequence is PVRQQSTGPSEPGAFQPPPKPV. At serine 77 the chain carries Phosphoserine.

The protein belongs to the bacterial ribosomal protein bL19 family. In terms of assembly, component of the mitochondrial ribosome large subunit (39S) which comprises a 16S rRNA and about 50 distinct proteins.

The protein localises to the mitochondrion. The protein is Large ribosomal subunit protein bL19m (MRPL19) of Pongo abelii (Sumatran orangutan).